The sequence spans 467 residues: Mitogen-activated protein kinase kinase kinase 8 (467 aa).

Phosphothreonine is present on Thr-80. Ser-138 and Ser-141 each carry phosphoserine. Residues 144–152 (VPRGAFGKV) and Lys-167 each bind ATP. In terms of domain architecture, Protein kinase spans 146-388 (RGAFGKVYLA…AADLLKHEAL (243 aa)). Residue Asp-253 is the Proton acceptor of the active site. At Thr-290 the chain carries Phosphothreonine. 2 positions are modified to phosphoserine: Ser-400 and Ser-443.

Belongs to the protein kinase superfamily. STE Ser/Thr protein kinase family. MAP kinase kinase kinase subfamily. As to quaternary structure, forms a ternary complex with NFKB1/p105 and TNIP2. Interacts with NFKB1; the interaction increases the stability of MAP3K8 but inhibits its MEK phosphorylation activity, whereas loss of interaction following LPS stimulation leads to its degradation. Interacts with CD40 and TRAF6; the interaction is required for ERK activation. Interacts with KSR2; the interaction inhibits ERK and NF-kappa-B activation. The cofactor is Mg(2+). Post-translationally, autophosphorylated. In terms of tissue distribution, expressed in spleen, thymus, liver and lung.

The protein localises to the cytoplasm. The enzyme catalyses L-seryl-[protein] + ATP = O-phospho-L-seryl-[protein] + ADP + H(+). It carries out the reaction L-threonyl-[protein] + ATP = O-phospho-L-threonyl-[protein] + ADP + H(+). Required for lipopolysaccharide (LPS)-induced, TLR4-mediated activation of the MAPK/ERK pathway in macrophages, thus being critical for production of the pro-inflammatory cytokine TNF-alpha (TNF) during immune responses. Involved in the regulation of T-helper cell differentiation and IFNG expression in T-cells. Involved in mediating host resistance to bacterial infection through negative regulation of type I interferon (IFN) production. Transduces CD40 and TNFRSF1A signals that activate ERK in B-cells and macrophages, and thus may play a role in the regulation of immunoglobulin production. May also play a role in the transduction of TNF signals that activate JNK and NF-kappa-B in some cell types. In adipocytes, activates MAPK/ERK pathway in an IKBKB-dependent manner in response to IL1B and TNF, but not insulin, leading to induction of lipolysis. Plays a role in the cell cycle. The protein is Mitogen-activated protein kinase kinase kinase 8 (Map3k8) of Rattus norvegicus (Rat).